A 417-amino-acid chain; its full sequence is 4-hydroxy-3-methylbut-2-en-1-yl diphosphate synthase (flavodoxin) (417 aa).

The [4Fe-4S] cluster site is built by cysteine 303, cysteine 306, cysteine 349, and glutamate 356.

It belongs to the IspG family. It depends on [4Fe-4S] cluster as a cofactor.

It carries out the reaction (2E)-4-hydroxy-3-methylbut-2-enyl diphosphate + oxidized [flavodoxin] + H2O + 2 H(+) = 2-C-methyl-D-erythritol 2,4-cyclic diphosphate + reduced [flavodoxin]. It functions in the pathway isoprenoid biosynthesis; isopentenyl diphosphate biosynthesis via DXP pathway; isopentenyl diphosphate from 1-deoxy-D-xylulose 5-phosphate: step 5/6. In terms of biological role, converts 2C-methyl-D-erythritol 2,4-cyclodiphosphate (ME-2,4cPP) into 1-hydroxy-2-methyl-2-(E)-butenyl 4-diphosphate. The chain is 4-hydroxy-3-methylbut-2-en-1-yl diphosphate synthase (flavodoxin) from Mesorhizobium japonicum (strain LMG 29417 / CECT 9101 / MAFF 303099) (Mesorhizobium loti (strain MAFF 303099)).